A 140-amino-acid polypeptide reads, in one-letter code: Nucleoside diphosphate kinase (140 aa).

Lysine 11, phenylalanine 59, arginine 87, threonine 93, arginine 104, and asparagine 114 together coordinate ATP. The active-site Pros-phosphohistidine intermediate is histidine 117.

It belongs to the NDK family. In terms of assembly, homotetramer. Requires Mg(2+) as cofactor.

The protein resides in the cytoplasm. It carries out the reaction a 2'-deoxyribonucleoside 5'-diphosphate + ATP = a 2'-deoxyribonucleoside 5'-triphosphate + ADP. The enzyme catalyses a ribonucleoside 5'-diphosphate + ATP = a ribonucleoside 5'-triphosphate + ADP. Its function is as follows. Major role in the synthesis of nucleoside triphosphates other than ATP. The ATP gamma phosphate is transferred to the NDP beta phosphate via a ping-pong mechanism, using a phosphorylated active-site intermediate. In Roseobacter denitrificans (strain ATCC 33942 / OCh 114) (Erythrobacter sp. (strain OCh 114)), this protein is Nucleoside diphosphate kinase.